The chain runs to 347 residues: UDP-N-acetylenolpyruvoylglucosamine reductase (347 aa).

In terms of domain architecture, FAD-binding PCMH-type spans 24–195; that stretch reads FDARARVAAR…VAVTFRLPKA (172 aa). Arginine 171 is an active-site residue. Serine 247 acts as the Proton donor in catalysis. Glutamate 343 is a catalytic residue.

Belongs to the MurB family. FAD is required as a cofactor.

The protein resides in the cytoplasm. The catalysed reaction is UDP-N-acetyl-alpha-D-muramate + NADP(+) = UDP-N-acetyl-3-O-(1-carboxyvinyl)-alpha-D-glucosamine + NADPH + H(+). It functions in the pathway cell wall biogenesis; peptidoglycan biosynthesis. Cell wall formation. The polypeptide is UDP-N-acetylenolpyruvoylglucosamine reductase (Burkholderia mallei (strain NCTC 10247)).